The primary structure comprises 146 residues: Prolactin-inducible protein (146 aa).

An N-terminal signal peptide occupies residues 1–28 (MRLLQLLFRASPATLLLVLCLQLGANKA). A Pyrrolidone carboxylic acid modification is found at Q29. 2 disulfides stabilise this stretch: C65/C91 and C89/C123. An N-linked (GlcNAc...) asparagine glycan is attached at N105.

The protein belongs to the PIP family. Monomer. Interacts with AZGP1. Expressed in pathological conditions of the mammary gland and in several exocrine tissues, such as the lacrimal, salivary, and sweat glands.

The protein resides in the secreted. The protein is Prolactin-inducible protein (PIP) of Homo sapiens (Human).